A 115-amino-acid polypeptide reads, in one-letter code: MNMLMVLTVNMMLSTCLILIAFWLPQLNLYTEKANPYECGFDPMSSARLPFSMKFFLVAITFLLFDLEIALLLPLSWAIQMPNINIMTLTSFILVSVLALGLAYEWLQKGLEWTE.

Helical transmembrane passes span 4–24 (LMVLTVNMMLSTCLILIAFWL), 55–75 (FFLVAITFLLFDLEIALLLPL), and 84–104 (INIMTLTSFILVSVLALGLAY).

The protein belongs to the complex I subunit 3 family. Core subunit of respiratory chain NADH dehydrogenase (Complex I) which is composed of 45 different subunits. Interacts with TMEM186. Interacts with TMEM242.

The protein resides in the mitochondrion membrane. The catalysed reaction is a ubiquinone + NADH + 5 H(+)(in) = a ubiquinol + NAD(+) + 4 H(+)(out). In terms of biological role, core subunit of the mitochondrial membrane respiratory chain NADH dehydrogenase (Complex I) that is believed to belong to the minimal assembly required for catalysis. Complex I functions in the transfer of electrons from NADH to the respiratory chain. The immediate electron acceptor for the enzyme is believed to be ubiquinone. This is NADH-ubiquinone oxidoreductase chain 3 from Onychomys leucogaster (Northern grasshopper mouse).